The primary structure comprises 97 residues: Essential MCU regulator, mitochondrial (97 aa).

The N-terminal 35 residues, 1-35, are a transit peptide targeting the mitochondrion; that stretch reads MIVPRLALPISLALQRVSRRVAEHPHNLRILQRHM. A helical transmembrane segment spans residues 53–73; the sequence is PFGLLAIFCAVIPGLFVGATI.

The protein belongs to the SMDT1/EMRE family.

Its subcellular location is the mitochondrion inner membrane. In terms of biological role, essential regulatory subunit of the mitochondrial calcium uniporter MCU channel, a protein that mediates calcium uptake into mitochondria. The sequence is that of Essential MCU regulator, mitochondrial from Drosophila melanogaster (Fruit fly).